Consider the following 213-residue polypeptide: Thiamine-phosphate synthase (213 aa).

4-amino-2-methyl-5-(diphosphooxymethyl)pyrimidine contacts are provided by residues 39–43 (QYRDK) and aspartate 71. The Mg(2+) site is built by aspartate 72 and aspartate 91. Serine 108 is a 4-amino-2-methyl-5-(diphosphooxymethyl)pyrimidine binding site. 135 to 137 (TDT) contacts 2-[(2R,5Z)-2-carboxy-4-methylthiazol-5(2H)-ylidene]ethyl phosphate. Lysine 138 is a 4-amino-2-methyl-5-(diphosphooxymethyl)pyrimidine binding site. Residues glycine 165 and 185–186 (VS) each bind 2-[(2R,5Z)-2-carboxy-4-methylthiazol-5(2H)-ylidene]ethyl phosphate.

The protein belongs to the thiamine-phosphate synthase family. It depends on Mg(2+) as a cofactor.

It carries out the reaction 2-[(2R,5Z)-2-carboxy-4-methylthiazol-5(2H)-ylidene]ethyl phosphate + 4-amino-2-methyl-5-(diphosphooxymethyl)pyrimidine + 2 H(+) = thiamine phosphate + CO2 + diphosphate. The catalysed reaction is 2-(2-carboxy-4-methylthiazol-5-yl)ethyl phosphate + 4-amino-2-methyl-5-(diphosphooxymethyl)pyrimidine + 2 H(+) = thiamine phosphate + CO2 + diphosphate. The enzyme catalyses 4-methyl-5-(2-phosphooxyethyl)-thiazole + 4-amino-2-methyl-5-(diphosphooxymethyl)pyrimidine + H(+) = thiamine phosphate + diphosphate. It participates in cofactor biosynthesis; thiamine diphosphate biosynthesis; thiamine phosphate from 4-amino-2-methyl-5-diphosphomethylpyrimidine and 4-methyl-5-(2-phosphoethyl)-thiazole: step 1/1. Condenses 4-methyl-5-(beta-hydroxyethyl)thiazole monophosphate (THZ-P) and 2-methyl-4-amino-5-hydroxymethyl pyrimidine pyrophosphate (HMP-PP) to form thiamine monophosphate (TMP). The chain is Thiamine-phosphate synthase from Thermoplasma acidophilum (strain ATCC 25905 / DSM 1728 / JCM 9062 / NBRC 15155 / AMRC-C165).